Consider the following 340-residue polypeptide: Adenosine deaminase-like protein (340 aa).

Zn(2+) is bound by residues His-14 and His-16. Residues His-16, Asn-18, His-68, 100 to 103, and Gly-173 each bind N(6)-methyl-AMP; that span reads TTPK. His-200 serves as a coordination point for Zn(2+). 3 residues coordinate N(6)-methyl-AMP: Glu-203, Asp-278, and Asp-279. The Proton donor role is filled by Glu-203. Asp-278 serves as a coordination point for Zn(2+).

Belongs to the metallo-dependent hydrolases superfamily. Adenosine and AMP deaminases family. As to quaternary structure, monomer. The cofactor is Zn(2+).

The catalysed reaction is N(6)-methyl-AMP + H2O + H(+) = IMP + methylamine. Functionally, catalyzes the hydrolysis of the free cytosolic methylated adenosine nucleotide N(6)-methyl-AMP (N6-mAMP) to produce inositol monophosphate (IMP) and methylamine. Is required for the catabolism of cytosolic N6-mAMP, which is derived from the degradation of mRNA containing N6-methylated adenine (m6A). This is Adenosine deaminase-like protein from Drosophila pseudoobscura pseudoobscura (Fruit fly).